The primary structure comprises 165 residues: Natriuretic peptide Na-NP (165 aa).

The N-terminal stretch at 1–25 (MVGLSRLAGGGLLLVLALLPLALDG) is a signal peptide. The propeptide occupies 26–83 (KPAPEALHKPPTGLRTSLAALRILGYLRPDSKQSRAARDRMLHPEQQVGGGGDSRPLQ). Residues 56 to 68 (SKQSRAARDRMLH) are compositionally biased toward basic and acidic residues. Disordered regions lie at residues 56 to 100 (SKQS…QKID) and 135 to 165 (PDSK…SRVI). A disulfide bridge links cysteine 94 with cysteine 110. A propeptide spanning residues 129-165 (ILEYLRPDSKRSRATRDRMLHPEQQVGGGGGGGSRVI) is cleaved from the precursor. Residues 135 to 149 (PDSKRSRATRDRMLH) show a composition bias toward basic and acidic residues. Over residues 154-165 (VGGGGGGGSRVI) the composition is skewed to gly residues.

This sequence belongs to the natriuretic peptide family. As to expression, expressed by the venom gland.

The protein localises to the secreted. Its function is as follows. Natriuretic peptide that dose-dependently induces the rapid relaxation of rat aortic strips phenylephrine-precontracted. Acts by stimulating cGMP production in a dose-dependent manner (by probably activating NPR1 and/or NPR2). May also show potent hypotensive effects. The protein is Natriuretic peptide Na-NP of Naja atra (Chinese cobra).